We begin with the raw amino-acid sequence, 290 residues long: Transcription factor HES-1 (290 aa).

The segment at 1-47 is disordered; sequence MPADTGMEKPTASPIAGAPASASHTPDKPRSASEHRKSSKPIMEKRR. Residues 10–23 are compositionally biased toward low complexity; that stretch reads PTASPIAGAPASAS. Positions 25-36 are enriched in basic and acidic residues; it reads TPDKPRSASEHR. The 58-residue stretch at 35 to 92 folds into the bHLH domain; sequence HRKSSKPIMEKRRRARINESLGQLKMLILDALKKDSSRHSKLEKADILEMTVKHLRNL. One can recognise an Orange domain in the interval 111–144; sequence YRAGFNECMNEVTRFLSTCEGVNADVRARLLGHL. Residues 287 to 290 carry the WRPW motif motif; sequence WRPW.

As to quaternary structure, transcription repression requires formation of a complex with a corepressor protein of the Groucho/TLE family.

It localises to the nucleus. In terms of biological role, transcriptional repressor of genes that require a bHLH protein for their transcription. May act as a negative regulator of myogenesis by inhibiting the functions of MYOD1 and ASH1. In Gallus gallus (Chicken), this protein is Transcription factor HES-1 (HES1).